Consider the following 151-residue polypeptide: UPF0336 protein Franean1_6066 (151 aa).

The MaoC-like domain maps to valine 8–phenylalanine 127.

This sequence belongs to the UPF0336 family.

The chain is UPF0336 protein Franean1_6066 from Parafrankia sp. (strain EAN1pec).